Reading from the N-terminus, the 126-residue chain is Large ribosomal subunit protein bL12 (126 aa).

The protein belongs to the bacterial ribosomal protein bL12 family. As to quaternary structure, homodimer. Part of the ribosomal stalk of the 50S ribosomal subunit. Forms a multimeric L10(L12)X complex, where L10 forms an elongated spine to which 2 to 4 L12 dimers bind in a sequential fashion. Binds GTP-bound translation factors.

In terms of biological role, forms part of the ribosomal stalk which helps the ribosome interact with GTP-bound translation factors. Is thus essential for accurate translation. The protein is Large ribosomal subunit protein bL12 of Coxiella burnetii (strain CbuK_Q154) (Coxiella burnetii (strain Q154)).